We begin with the raw amino-acid sequence, 110 residues long: DNA-directed RNA polymerase subunit omega (110 aa).

The protein belongs to the RNA polymerase subunit omega family. As to quaternary structure, the RNAP catalytic core consists of 2 alpha, 1 beta, 1 beta' and 1 omega subunit. When a sigma factor is associated with the core the holoenzyme is formed, which can initiate transcription.

The enzyme catalyses RNA(n) + a ribonucleoside 5'-triphosphate = RNA(n+1) + diphosphate. In terms of biological role, promotes RNA polymerase assembly. Latches the N- and C-terminal regions of the beta' subunit thereby facilitating its interaction with the beta and alpha subunits. The protein is DNA-directed RNA polymerase subunit omega of Vesicomyosocius okutanii subsp. Calyptogena okutanii (strain HA).